The chain runs to 316 residues: MSLRVVYLGTPQFAATVLKTLLDAHTHIVGIVTRADKPQKRSSKLISSPVKQLALSKNIPLLQPIKTTDPAFLAQLREWQADVFIVVAYGVILKQELLDIPTYGCYNLHAGLLPAYRGAAPIQRCIMDGGVLSGNTVIRMDAGMDTGDIANVNYVAIGEDMTAGGLAEALAASGGELLLKTLQEIEAGTVRHVPQNEAMATLAPKLTKEEGGIHWDAPASQVYAHIRGVSPAPGAWTRYLSQGKGARRLGVLSARMESFSGNYGDPGEVLGVSGEDLLIACRQGALRLRMVQPEGKALMKAKDFFNGQSRLVSKLF.

111–114 (GLLP) is a binding site for (6S)-5,6,7,8-tetrahydrofolate.

The protein belongs to the Fmt family.

It catalyses the reaction L-methionyl-tRNA(fMet) + (6R)-10-formyltetrahydrofolate = N-formyl-L-methionyl-tRNA(fMet) + (6S)-5,6,7,8-tetrahydrofolate + H(+). Functionally, attaches a formyl group to the free amino group of methionyl-tRNA(fMet). The formyl group appears to play a dual role in the initiator identity of N-formylmethionyl-tRNA by promoting its recognition by IF2 and preventing the misappropriation of this tRNA by the elongation apparatus. The sequence is that of Methionyl-tRNA formyltransferase from Chlamydia trachomatis serovar A (strain ATCC VR-571B / DSM 19440 / HAR-13).